A 319-amino-acid chain; its full sequence is Homoserine kinase (319 aa).

100–110 provides a ligand contact to ATP; that stretch reads PLSSGMGSSAS.

It belongs to the GHMP kinase family. Homoserine kinase subfamily.

The protein resides in the cytoplasm. The catalysed reaction is L-homoserine + ATP = O-phospho-L-homoserine + ADP + H(+). The protein operates within amino-acid biosynthesis; L-threonine biosynthesis; L-threonine from L-aspartate: step 4/5. Functionally, catalyzes the ATP-dependent phosphorylation of L-homoserine to L-homoserine phosphate. This chain is Homoserine kinase, found in Chloroherpeton thalassium (strain ATCC 35110 / GB-78).